Consider the following 423-residue polypeptide: Mannose-6-phosphate isomerase (423 aa).

At Ala2 the chain carries N-acetylalanine. Ser102 and Ser108 each carry phosphoserine. Zn(2+) contacts are provided by Gln110, His112, Glu137, and His276. Arg295 is an active-site residue.

This sequence belongs to the mannose-6-phosphate isomerase type 1 family. Zn(2+) is required as a cofactor.

It localises to the cytoplasm. The catalysed reaction is D-mannose 6-phosphate = D-fructose 6-phosphate. It participates in nucleotide-sugar biosynthesis; GDP-alpha-D-mannose biosynthesis; alpha-D-mannose 1-phosphate from D-fructose 6-phosphate: step 1/2. Its function is as follows. Isomerase that catalyzes the interconversion of fructose-6-P and mannose-6-P and has a critical role in the supply of D-mannose derivatives required for many eukaryotic glycosylation reactions. The protein is Mannose-6-phosphate isomerase (MPI) of Pan troglodytes (Chimpanzee).